The following is a 153-amino-acid chain: Transcription antitermination protein NusB (153 aa).

The protein belongs to the NusB family.

Involved in transcription antitermination. Required for transcription of ribosomal RNA (rRNA) genes. Binds specifically to the boxA antiterminator sequence of the ribosomal RNA (rrn) operons. This is Transcription antitermination protein NusB from Beutenbergia cavernae (strain ATCC BAA-8 / DSM 12333 / CCUG 43141 / JCM 11478 / NBRC 16432 / NCIMB 13614 / HKI 0122).